The sequence spans 464 residues: Argininosuccinate lyase (464 aa).

Belongs to the lyase 1 family. Argininosuccinate lyase subfamily.

The protein resides in the cytoplasm. It carries out the reaction 2-(N(omega)-L-arginino)succinate = fumarate + L-arginine. It participates in amino-acid biosynthesis; L-arginine biosynthesis; L-arginine from L-ornithine and carbamoyl phosphate: step 3/3. The protein is Argininosuccinate lyase of Chlorobium phaeobacteroides (strain DSM 266 / SMG 266 / 2430).